We begin with the raw amino-acid sequence, 665 residues long: Protein kinase domain-containing protein ppk2 (665 aa).

Disordered stretches follow at residues 42-63, 82-152, 187-217, and 286-343; these read PNDS…KKKF, GNST…LSRS, LNSQ…SSMN, and AESL…VGHP. Positions 82–104 are enriched in polar residues; that stretch reads GNSTRSPPFHLQNQKSNGQSEVW. Composition is skewed to low complexity over residues 137–152 and 206–217; these read SLSR…LSRS and TNRLSSSTSSMN. Positions 294-316 are enriched in polar residues; the sequence is SATTIQQGDVSSYPLSRSVSTPV. A Phosphoserine modification is found at S358. Residues 388 to 637 enclose the Protein kinase domain; it reads YTDFTKICQQ…NMLLETSSFL (250 aa). Residues 394 to 402 and K417 each bind ATP; that span reads ICQQDTVGT.

Its subcellular location is the cytoplasm. The protein is Protein kinase domain-containing protein ppk2 (ppk2) of Schizosaccharomyces pombe (strain 972 / ATCC 24843) (Fission yeast).